Reading from the N-terminus, the 142-residue chain is Hemoglobin subunit zeta (142 aa).

Position 2 is an N-acetylserine (S2). One can recognise a Globin domain in the interval 2–142 (SLTRTERTII…VSGVLTEKYR (141 aa)). Residue T29 is modified to Phosphothreonine. Residue S53 is modified to Phosphoserine. H59 serves as a coordination point for heme b. Phosphoserine is present on residues S73 and S82. H88 is a heme b binding site.

The protein belongs to the globin family. In terms of assembly, heterotetramer of two zeta chains and beta-type chains.

Its function is as follows. The zeta chain is an alpha-type chain of mammalian embryonic hemoglobin. This chain is Hemoglobin subunit zeta (HBZ1), found in Capra hircus (Goat).